The primary structure comprises 342 residues: MSTAESRNHYKEVPTIEHYSEAIGITNRKKMDWRGWLRKSTLVRSQLIRGCMAEFLAVFVLMVFIEGSAATAIFTNRRQDILFGSISSGLGVAMAVYVAGGVSGAFLNPAVALAFAVLGKLSWKNCIFYMISQYLAAFVASCTMFAYLYEALNNFDGGERQMFGPNGTAHIWSTYPQPFLSPHTAFADQVFCTAILLIVVLAMCDSKNWKPHNGFLPIAIGLLIITISCTLSYNAGAAMNPSRDLAPRFFSYLAGYGTEPFGVKGYTWFFVPVLGSHCGAIIGGAIYQLFIGGQWPDDTSDTNSVSSMSYNEDNSTLTKRKQVSNIVHDSKGAKGSSTAPVN.

Transmembrane regions (helical) follow at residues phenylalanine 55–threonine 75, valine 98–leucine 118, and cysteine 126–alanine 146. The NPA 1 signature appears at asparagine 108–alanine 110. An N-linked (GlcNAc...) asparagine glycan is attached at asparagine 166. 2 consecutive transmembrane segments (helical) span residues threonine 184–cysteine 204 and phenylalanine 215–alanine 235. An NPA 2 motif is present at residues asparagine 240 to serine 242. A helical transmembrane segment spans residues tyrosine 266–isoleucine 286. The span at threonine 302–valine 327 shows a compositional bias: polar residues. The tract at residues threonine 302–asparagine 342 is disordered. The N-linked (GlcNAc...) asparagine glycan is linked to asparagine 314.

The protein belongs to the MIP/aquaporin (TC 1.A.8) family.

It is found in the cell membrane. Its function is as follows. Aquaglyceroporin that may modulate the water content and osmolytes during anhydrobiosis. The chain is Aquaporin-8 from Milnesium tardigradum (Water bear).